Consider the following 118-residue polypeptide: Large ribosomal subunit protein bL20 (118 aa).

It belongs to the bacterial ribosomal protein bL20 family.

Functionally, binds directly to 23S ribosomal RNA and is necessary for the in vitro assembly process of the 50S ribosomal subunit. It is not involved in the protein synthesizing functions of that subunit. In Caldicellulosiruptor saccharolyticus (strain ATCC 43494 / DSM 8903 / Tp8T 6331), this protein is Large ribosomal subunit protein bL20.